A 388-amino-acid chain; its full sequence is Mannitol-1-phosphate 5-dehydrogenase (388 aa).

Residue alanine 5–glycine 16 coordinates NAD(+). The active site involves lysine 213.

It belongs to the mannitol dehydrogenase family. In terms of assembly, monomer.

The enzyme catalyses D-mannitol 1-phosphate + NAD(+) = beta-D-fructose 6-phosphate + NADH + H(+). Catalyzes the NAD(H)-dependent interconversion of D-fructose 6-phosphate and D-mannitol 1-phosphate in the mannitol metabolic pathway. The polypeptide is Mannitol-1-phosphate 5-dehydrogenase (mpdA) (Aspergillus clavatus (strain ATCC 1007 / CBS 513.65 / DSM 816 / NCTC 3887 / NRRL 1 / QM 1276 / 107)).